We begin with the raw amino-acid sequence, 446 residues long: SWI/SNF chromatin-remodeling accessory subunit 1 (446 aa).

A disordered region spans residues 1–53; the sequence is MQTQARPPVPQGPRFNHPATPQQVRRPINAPLPGQTAQIQGNRGPQPPKKKKR. Positions 220 to 297 constitute an SWIB/MDM2 domain; it reads YQPMKFKLHP…PQRLHQLLQQ (78 aa).

This sequence belongs to the SMARCD family. As to quaternary structure, component of the multiprotein chromatin-remodeling complexes SWI/SNF: SWI/SNF-A (BAF), SWI/SNF-B (PBAF) and related complexes. The canonical complex contains a catalytic subunit swsn-4, core subunits swsn-1 and swsn-5, and accessory subunits swsn-3, swsn-6, phf-10, dpff-1, swsn-9 and either ham-3/swsn-2.1 or swsn-2.2. May interact with blmp-1. As to expression, broadly expressed in all cell types.

It localises to the nucleus. In terms of biological role, involved in transcriptional activation and repression of select genes by chromatin remodeling (alteration of DNA-nucleosome topology). Component of SWI/SNF chromatin remodeling complexes that carry out key enzymatic activities, changing chromatin structure by altering DNA-histone contacts within a nucleosome in an ATP-dependent manner. Required for the blmp-1-mediated transcriptional activation or repression of several hypodermal genes such as bed-3. Involved in regulating differentiation, migration and axon pathfinding of specific serotonergic neurons (HSNs). Probably regulates vulva development through the let-60/Ras pathway. May be involved in regulation of developmental processes in the embryo driven by the Wnt pathway. Involved in gonadogenesis. This chain is SWI/SNF chromatin-remodeling accessory subunit 1, found in Caenorhabditis elegans.